We begin with the raw amino-acid sequence, 219 residues long: Polysialic acid transport ATP-binding protein KpsT (219 aa).

In terms of domain architecture, ABC transporter spans 2-218 (IKIENLTKSY…TEAIADYKKD (217 aa)). Position 38–45 (38–45 (GQNGAGKS)) interacts with ATP.

The protein belongs to the ABC transporter superfamily.

It localises to the cell inner membrane. In terms of biological role, putative ATP-binding protein, and an energy coupling component for the transport of polysialic acid across the cytoplasmic membrane. The protein is Polysialic acid transport ATP-binding protein KpsT (kpsT) of Escherichia coli.